The primary structure comprises 394 residues: Ceramide synthase 4 (394 aa).

Over 1-31 (MLSSFNEWFWQDRFWLPPNVTWTELEDRDGR) the chain is Lumenal. Residue Asn-19 is glycosylated (N-linked (GlcNAc...) asparagine). A helical membrane pass occupies residues 32-52 (VYPHPQDLLAALPLALVLLAM). Residues 67 to 128 (WLGVRDQTRR…RRRRNQDRPQ (62 aa)) are homeobox-like. In terms of domain architecture, TLC spans 131 to 332 (KKFCEASWRF…ILRMLYSFMK (202 aa)). The next 4 helical transmembrane spans lie at 140–160 (FLFY…ESWL), 179–199 (LYWW…RLPF), 209–229 (QVIH…ANLL), and 260–280 (VCDA…LVLF). The Last loop motif motif lies at 291 to 301 (ESISNRGPFFG). Residues 304 to 324 (FFNGLLMLLQLLHVFWSCLIL) form a helical membrane-spanning segment. The Cytoplasmic segment spans residues 325–394 (RMLYSFMKKG…RLTNRHTTAT (70 aa)). Positions 341–394 (RSDVEESDSSEEAAAAQEPLQLKNGAAGGPRPAPTDGPRSRVAGRLTNRHTTAT) are disordered. Phosphoserine is present on residues Ser-342, Ser-349, and Ser-350.

Post-translationally, phosphorylated at the C-terminus by CK2. N-glycosylated.

The protein resides in the endoplasmic reticulum membrane. The catalysed reaction is sphinganine + octadecanoyl-CoA = N-(octadecanoyl)-sphinganine + CoA + H(+). The enzyme catalyses eicosanoyl-CoA + sphinganine = N-eicosanoylsphinganine + CoA + H(+). It catalyses the reaction docosanoyl-CoA + sphinganine = N-docosanoylsphinganine + CoA + H(+). It carries out the reaction tetracosanoyl-CoA + sphinganine = N-tetracosanoylsphinganine + CoA + H(+). The catalysed reaction is hexacosanoyl-CoA + sphinganine = N-hexacosanoylsphinganine + CoA + H(+). The enzyme catalyses a fatty acyl-CoA + sphing-4-enine = an N-acylsphing-4-enine + CoA + H(+). It catalyses the reaction sphing-4-enine + octadecanoyl-CoA = N-octadecanoylsphing-4-enine + CoA + H(+). It carries out the reaction hexadecasphinganine + octadecanoyl-CoA = N-octadecanoylhexadecasphinganine + CoA + H(+). It participates in lipid metabolism; sphingolipid metabolism. In terms of biological role, ceramide synthase that catalyzes formation of ceramide from sphinganine and acyl-CoA substrates, with high selectivity toward long and very-long chains (C18:0-C22:0) as acyl donor. This Homo sapiens (Human) protein is Ceramide synthase 4.